Here is a 230-residue protein sequence, read N- to C-terminus: Urease accessory protein UreF (230 aa).

Belongs to the UreF family. As to quaternary structure, ureD, UreF and UreG form a complex that acts as a GTP-hydrolysis-dependent molecular chaperone, activating the urease apoprotein by helping to assemble the nickel containing metallocenter of UreC. The UreE protein probably delivers the nickel.

The protein localises to the cytoplasm. In terms of biological role, required for maturation of urease via the functional incorporation of the urease nickel metallocenter. This is Urease accessory protein UreF from Polynucleobacter asymbioticus (strain DSM 18221 / CIP 109841 / QLW-P1DMWA-1) (Polynucleobacter necessarius subsp. asymbioticus).